The following is a 521-amino-acid chain: NAD(P)H-quinone oxidoreductase subunit 2 (521 aa).

Helical transmembrane passes span 16-36 (ILPE…DLIG), 43-63 (WLPY…YTAW), 80-100 (LSIV…LMSI), 110-130 (LAEF…LSGA), 133-153 (LVMI…MTGY), 168-188 (LLIG…LYGL), 211-231 (LGLA…ISAV), 245-265 (PTPV…ALAI), 279-299 (WHLI…VVAL), 307-327 (MLAY…TAGT), 335-355 (VFYL…VILF), 379-399 (LGLS…GFFG), 401-421 (IYLF…LALV), and 467-487 (VGLV…NPLF).

The protein belongs to the complex I subunit 2 family. As to quaternary structure, NDH-1 can be composed of about 15 different subunits; different subcomplexes with different compositions have been identified which probably have different functions.

The protein resides in the cellular thylakoid membrane. The enzyme catalyses a plastoquinone + NADH + (n+1) H(+)(in) = a plastoquinol + NAD(+) + n H(+)(out). It catalyses the reaction a plastoquinone + NADPH + (n+1) H(+)(in) = a plastoquinol + NADP(+) + n H(+)(out). In terms of biological role, NDH-1 shuttles electrons from an unknown electron donor, via FMN and iron-sulfur (Fe-S) centers, to quinones in the respiratory and/or the photosynthetic chain. The immediate electron acceptor for the enzyme in this species is believed to be plastoquinone. Couples the redox reaction to proton translocation, and thus conserves the redox energy in a proton gradient. Cyanobacterial NDH-1 also plays a role in inorganic carbon-concentration. The polypeptide is NAD(P)H-quinone oxidoreductase subunit 2 (Crocosphaera subtropica (strain ATCC 51142 / BH68) (Cyanothece sp. (strain ATCC 51142))).